The following is a 357-amino-acid chain: Glutamine synthetase (357 aa).

One can recognise a GS beta-grasp domain in the interval 25–104 (VMAEYIWIDA…VLCETWDSDG (80 aa)). The 247-residue stretch at 111-357 (YRHDCARLME…IIAETLCGGL (247 aa)) folds into the GS catalytic domain.

The protein belongs to the glutamine synthetase family. As to quaternary structure, homooctamer.

It localises to the cytoplasm. The catalysed reaction is L-glutamate + NH4(+) + ATP = L-glutamine + ADP + phosphate + H(+). The chain is Glutamine synthetase (glnA) from Emericella nidulans (strain FGSC A4 / ATCC 38163 / CBS 112.46 / NRRL 194 / M139) (Aspergillus nidulans).